A 137-amino-acid polypeptide reads, in one-letter code: Putative pre-16S rRNA nuclease (137 aa).

Belongs to the YqgF nuclease family.

It is found in the cytoplasm. Its function is as follows. Could be a nuclease involved in processing of the 5'-end of pre-16S rRNA. The protein is Putative pre-16S rRNA nuclease of Chromobacterium violaceum (strain ATCC 12472 / DSM 30191 / JCM 1249 / CCUG 213 / NBRC 12614 / NCIMB 9131 / NCTC 9757 / MK).